The sequence spans 156 residues: LIM domain only protein 3 (156 aa).

LIM zinc-binding domains are found at residues 22-84 (KGCA…LFGV) and 86-148 (GNCA…GLMK).

The polypeptide is LIM domain only protein 3 (Xenopus laevis (African clawed frog)).